The sequence spans 2492 residues: Transcriptional regulator ATRX (2492 aa).

The segment at 1–147 is disordered; the sequence is MTAEPMSESK…KDDFKGPEFR (147 aa). Lysine 10 is covalently cross-linked (Glycyl lysine isopeptide (Lys-Gly) (interchain with G-Cter in SUMO2)). Positions 17–27 are enriched in basic and acidic residues; sequence KLHDFLAHSSE. A phosphoserine mark is found at serine 25 and serine 34. Over residues 40 to 57 the composition is skewed to polar residues; that stretch reads MNQNTDKISGSGSNSDMM. Over residues 58 to 72 the composition is skewed to basic and acidic residues; the sequence is ENSKEEGTSSSEKSK. Phosphotyrosine is present on tyrosine 89. Residues serine 92 and serine 112 each carry the phosphoserine modification. Residues 92 to 108 show a composition bias toward acidic residues; that stretch reads SDDEKPLDDETVNEDAS. Positions 135-147 are enriched in basic and acidic residues; that stretch reads NEDKDDFKGPEFR. Residues lysine 138 and lysine 142 each participate in a glycyl lysine isopeptide (Lys-Gly) (interchain with G-Cter in SUMO2) cross-link. Residues 159–296 form the ADD domain; sequence KRGEDGLHGI…LEQLLQQNKK (138 aa). The GATA-type; atypical zinc-finger motif lies at 170–206; sequence SCTACGQQVNHFQKDSIYRHPSLQVLICKNCFKYYMS. Serine 213 carries the post-translational modification Phosphoserine. The PHD-type; atypical zinc-finger motif lies at 217–272; the sequence is DEQCRWCAEGGNLICCDFCHNAFCKKCILRNLGRKELSTIMDENNQWYCYICHPEP. Lysine 299 participates in a covalent cross-link: Glycyl lysine isopeptide (Lys-Gly) (interchain with G-Cter in SUMO2). The residue at position 316 (serine 316) is a Phosphoserine. Lysine 438 is covalently cross-linked (Glycyl lysine isopeptide (Lys-Gly) (interchain with G-Cter in SUMO2)). Residues 445–502 show a composition bias toward basic and acidic residues; it reads KGEKPCALEKKDISKSEAKLSRKQVDSEHMHQNVPTEEQRTNKSTGGEHKKSDRKEEP. 2 disordered regions span residues 445-516 and 535-576; these read KGEK…LDMD and AMEV…GIKS. Positions 550–567 are enriched in polar residues; it reads SGTEQEVESSSVKLNISS. Residues 581–594 carry the PxVxL motif motif; it reads KVTKELYVKLTPVS. A Phosphothreonine modification is found at threonine 591. A disordered region spans residues 593–616; the sequence is VSLSNSPIKGADCQEVPQDKDGYK. A phosphoserine mark is found at serine 594 and serine 598. Residue lysine 623 forms a Glycyl lysine isopeptide (Lys-Gly) (interchain with G-Cter in SUMO1); alternate linkage. A Glycyl lysine isopeptide (Lys-Gly) (interchain with G-Cter in SUMO2); alternate cross-link involves residue lysine 623. Serine 634 is subject to Phosphoserine. A disordered region spans residues 649-956; the sequence is EESDLRRSPR…KHLKTKTCKK (308 aa). Threonine 674 carries the phosphothreonine modification. Phosphoserine is present on residues serine 675, serine 677, serine 729, and serine 731. The span at 755 to 777 shows a compositional bias: basic and acidic residues; it reads NEIHTNHKTLYDLKTQAGKDDKG. 6 positions are modified to phosphoserine: serine 784, serine 819, serine 849, serine 850, serine 875, and serine 876. Over residues 843–864 the composition is skewed to basic and acidic residues; the sequence is NTKDFDSSEDEKHSKKGMDNQG. The span at 878–887 shows a compositional bias: basic and acidic residues; the sequence is DAERKQERET. A Phosphoserine modification is found at serine 889. 2 stretches are compositionally biased toward basic and acidic residues: residues 894–909 and 920–944; these read TVDK…DRLP and GVDK…ETKE. Residues 945–955 are compositionally biased toward basic residues; it reads KSKHLKTKTCK. At serine 962 the chain carries Phosphoserine. At lysine 967 the chain carries N6-acetyllysine. Residues 968–1004 are compositionally biased toward basic and acidic residues; sequence FLKKDQSDETSEDDKKQSKKGTEEKKKPSDFKKKVIK. The segment at 968 to 1479 is disordered; it reads FLKKDQSDET…SKSPGKGRKK (512 aa). Serine 974 is subject to Phosphoserine. Threonine 977 carries the post-translational modification Phosphothreonine. Lysine 1004 is covalently cross-linked (Glycyl lysine isopeptide (Lys-Gly) (interchain with G-Cter in SUMO2)). Residues serine 1011, serine 1012, and serine 1013 each carry the phosphoserine modification. The segment covering 1015–1027 has biased composition (basic and acidic residues); sequence GTEKLPEREEICH. A compositionally biased stretch (basic residues) spans 1045-1055; the sequence is KSKKIRDKTSK. The span at 1056 to 1082 shows a compositional bias: basic and acidic residues; the sequence is KKDELSDYAEKSTGKGDSCDSSEDKKS. Serine 1061 carries the phosphoserine modification. Tyrosine 1063 bears the Phosphotyrosine mark. Residues 1090–1102 show a composition bias toward basic residues; that stretch reads EKKRCKLLGKSSR. Basic and acidic residues predominate over residues 1103-1139; sequence KRQDCSSSDTEKYSMKEDGCNSSDKRLKRIELRERRN. Basic residues predominate over residues 1167–1195; the sequence is KKKQRTSSKKKAVIVKEKKRNSLRTSTKR. The interval 1189–1326 is interaction with DAXX; that stretch reads LRTSTKRKQA…KNQVNSESDS (138 aa). Polar residues predominate over residues 1233 to 1246; sequence LVLSSHTGFCQSSG. Residues serine 1244, serine 1245, and serine 1253 each carry the phosphoserine modification. Basic and acidic residues predominate over residues 1267-1281; the sequence is PENRIAKKMLLEEIK. Residues 1286-1297 are compositionally biased toward acidic residues; the sequence is SDEDGSSDDEPE. Over residues 1298-1308 the composition is skewed to basic and acidic residues; sequence EGKKRTGKQNE. Serine 1322, serine 1324, and serine 1326 each carry phosphoserine. Residues 1334 to 1345 are compositionally biased toward basic residues; it reads PRYRHRLLRHKL. Phosphoserine is present on residues serine 1348 and serine 1352. Composition is skewed to basic and acidic residues over residues 1353–1368 and 1408–1417; these read GEEK…EVKG and KKAELEENQR. A compositionally biased stretch (basic residues) spans 1419–1428; that stretch reads YKQKKKRRRI. Residues 1443-1468 show a composition bias toward acidic residues; it reads EEEEEEKEEEEEEEEEEEEEEEDEND. Lysine 1488 is covalently cross-linked (Glycyl lysine isopeptide (Lys-Gly) (interchain with G-Cter in SUMO2)). Serine 1527 is modified (phosphoserine). Threonine 1529 is modified (phosphothreonine). Residues 1581–1768 enclose the Helicase ATP-binding domain; that stretch reads KTKKSPGSGC…HCMVNFIKEN (188 aa). 1594–1601 lines the ATP pocket; the sequence is HCMGLGKT. The DEGH box motif lies at 1719–1722; that stretch reads DEGH. 2 positions are modified to phosphoserine: serine 1906 and serine 1913. The tract at residues 1913–2000 is disordered; it reads SDSDETSMSL…SSNPSSPAPD (88 aa). Basic residues predominate over residues 1929–1938; that stretch reads KKKKKGKKGK. A Glycyl lysine isopeptide (Lys-Gly) (interchain with G-Cter in SUMO1); alternate cross-link involves residue lysine 1982. Lysine 1982 is covalently cross-linked (Glycyl lysine isopeptide (Lys-Gly) (interchain with G-Cter in SUMO2); alternate). Residue lysine 1987 forms a Glycyl lysine isopeptide (Lys-Gly) (interchain with G-Cter in SUMO2) linkage. Residues 1990–1999 are compositionally biased toward low complexity; that stretch reads SSSNPSSPAP. Serine 1992 and serine 1996 each carry phosphoserine. Positions 2010–2280 are interaction with MECP2; the sequence is DAEVLEHSGK…RKAAWAEYEA (271 aa). Positions 2025-2205 constitute a Helicase C-terminal domain; sequence EILRMAEEIG…ERHFTMNELT (181 aa). Serine 2220 is modified (phosphoserine). Residues 2462-2492 form a disordered region; that stretch reads PVAGGMQPPPLQRAPPPMRSKNPGPSQGKSM. Positions 2468-2479 are enriched in pro residues; the sequence is QPPPLQRAPPPM. Omega-N-methylarginine occurs at positions 2474 and 2480.

The protein belongs to the SNF2/RAD54 helicase family. In terms of assembly, interacts with DAXX to form the chromatin remodeling complex ATRX:DAXX. Probably binds EZH2. Binds annexin V in a calcium and phosphatidylcholine/phosphatidylserine-dependent manner. Interacts directly with CBX5 via the PxVxL motif. Interacts with RAD50, MRE11 and NBN; indicative for an association with the MRN complex. Interacts with histone MACROH2A1. Interacts with histone H3 peptides methylated at 'Lys-10' with preferences H3K9me3 &gt; H3K9me2 &gt; H3K9me1. Interacts with histone H3 peptides unmethylated at 'Lys-5' (H3K4me0). Interacts with MECP2, SMC1 and SMC3. Interacts with SETDB1, TRIM28 and ZNF274. Phosphorylated at serine residues during mitose. Phosphorylation may promote the release from the nuclear matrix and progression to mitosis. As to expression, ubiquitous.

The protein localises to the nucleus. It is found in the chromosome. It localises to the telomere. Its subcellular location is the PML body. The enzyme catalyses ATP + H2O = ADP + phosphate + H(+). Its function is as follows. Involved in transcriptional regulation and chromatin remodeling. Facilitates DNA replication in multiple cellular environments and is required for efficient replication of a subset of genomic loci. Binds to DNA tandem repeat sequences in both telomeres and euchromatin and in vitro binds DNA quadruplex structures. May help stabilizing G-rich regions into regular chromatin structures by remodeling G4 DNA and incorporating H3.3-containing nucleosomes. Catalytic component of the chromatin remodeling complex ATRX:DAXX which has ATP-dependent DNA translocase activity and catalyzes the replication-independent deposition of histone H3.3 in pericentric DNA repeats outside S-phase and telomeres, and the in vitro remodeling of H3.3-containing nucleosomes. Its heterochromatin targeting is proposed to involve a combinatorial readout of histone H3 modifications (specifically methylation states of H3K9 and H3K4) and association with CBX5. Involved in maintaining telomere structural integrity in embryonic stem cells which probably implies recruitment of CBX5 to telomeres. Reports on the involvement in transcriptional regulation of telomeric repeat-containing RNA (TERRA) are conflicting; according to a report, it is not sufficient to decrease chromatin condensation at telomeres nor to increase expression of telomeric RNA in fibroblasts. May be involved in telomere maintenance via recombination in ALT (alternative lengthening of telomeres) cell lines. Acts as a negative regulator of chromatin incorporation of transcriptionally repressive histone MACROH2A1, particularily at telomeres and the alpha-globin cluster in erythroleukemic cells. Participates in the allele-specific gene expression at the imprinted IGF2/H19 gene locus. On the maternal allele, required for the chromatin occupancy of SMC1 and CTCTF within the H19 imprinting control region (ICR) and involved in esatblishment of histone tails modifications in the ICR. May be involved in brain development and facial morphogenesis. Binds to zinc-finger coding genes with atypical chromatin signatures and regulates its H3K9me3 levels. Forms a complex with ZNF274, TRIM28 and SETDB1 to facilitate the deposition and maintenance of H3K9me3 at the 3' exons of zinc-finger genes. The chain is Transcriptional regulator ATRX (ATRX) from Homo sapiens (Human).